The sequence spans 439 residues: Probable threonine protease PRSS50 (439 aa).

Disordered regions lie at residues 1–22 (MEPW…VPGA) and 48–130 (ERIR…TMAP). The first 47 residues, 1 to 47 (MEPWCGAEVRGQGPQGPRVPGASRSRSRALLLLLLLLLLLLPRRPAG), serve as a signal peptide directing secretion. Low complexity predominate over residues 9 to 21 (VRGQGPQGPRVPG). The Extracellular segment spans residues 48–415 (ERIRPRRPPR…WIWDRLSGEP (368 aa)). Residues 51–61 (RPRRPPRHAHP) are compositionally biased toward basic residues. The segment covering 112 to 127 (QAQTNQTTTAPPNSQT) has biased composition (low complexity). N-linked (GlcNAc...) asparagine glycosylation is found at asparagine 116 and asparagine 187. The Peptidase S1 domain occupies 157–412 (FCGSSHEPDP…YRPWIWDRLS (256 aa)). Cysteines 192 and 208 form a disulfide. Histidine 207 acts as the Charge relay system in catalysis. N-linked (GlcNAc...) asparagine glycosylation is present at asparagine 226. The Charge relay system role is filled by aspartate 260. 3 disulfides stabilise this stretch: cysteine 294–cysteine 370, cysteine 327–cysteine 350, and cysteine 360–cysteine 388. Threonine 364 functions as the Charge relay system in the catalytic mechanism. The helical transmembrane segment at 416-436 (LALPAPSRTLLLAFLLLLILL) threads the bilayer. The Cytoplasmic segment spans residues 437–439 (GTL).

The protein belongs to the peptidase S1 family.

The protein localises to the membrane. Its function is as follows. May be involved in proteolysis through its threonine endopeptidase activity. This Mus musculus (Mouse) protein is Probable threonine protease PRSS50 (Prss50).